The primary structure comprises 117 residues: MDTLSQMLTKIRNAQMARHRWVLVPASRMNWNVAQVLREEGLIAQVQPADLHLRIQLKPKRIQRIWRVSKPGLRIYSSYKNMPKVLGMLIISTSKGVMTHQKAKQMQVGGEILCGVY.

Belongs to the universal ribosomal protein uS8 family. As to quaternary structure, part of the 30S ribosomal subunit.

It is found in the plastid. It localises to the chloroplast. Its function is as follows. One of the primary rRNA binding proteins, it binds directly to 16S rRNA central domain where it helps coordinate assembly of the platform of the 30S subunit. This chain is Small ribosomal subunit protein uS8c (rps8), found in Cyanidioschyzon merolae (strain NIES-3377 / 10D) (Unicellular red alga).